A 394-amino-acid polypeptide reads, in one-letter code: Phosphopentomutase (394 aa).

The Mn(2+) site is built by D15, D288, H293, D329, H330, and H341.

It belongs to the phosphopentomutase family. Mn(2+) is required as a cofactor.

It localises to the cytoplasm. The catalysed reaction is 2-deoxy-alpha-D-ribose 1-phosphate = 2-deoxy-D-ribose 5-phosphate. The enzyme catalyses alpha-D-ribose 1-phosphate = D-ribose 5-phosphate. It participates in carbohydrate degradation; 2-deoxy-D-ribose 1-phosphate degradation; D-glyceraldehyde 3-phosphate and acetaldehyde from 2-deoxy-alpha-D-ribose 1-phosphate: step 1/2. In terms of biological role, isomerase that catalyzes the conversion of deoxy-ribose 1-phosphate (dRib-1-P) and ribose 1-phosphate (Rib-1-P) to deoxy-ribose 5-phosphate (dRib-5-P) and ribose 5-phosphate (Rib-5-P), respectively. The polypeptide is Phosphopentomutase (drm) (Bacillus subtilis (strain 168)).